Here is a 156-residue protein sequence, read N- to C-terminus: Acyl carrier protein, mitochondrial (156 aa).

The transit peptide at methionine 1–tyrosine 68 directs the protein to the mitochondrion. The 76-residue stretch at glutamate 77 to lysine 152 folds into the Carrier domain. N6-acetyllysine is present on lysine 88. Serine 112 carries the post-translational modification O-(pantetheine 4'-phosphoryl)serine.

Mammalian complex I is composed of 45 different subunits. Interacts with ETFRF1. Identified in a complex composed of MALSU1, MIEF1 upstream open reading frame protein and NDUFAB1; within the trimeric complex MIEF1 upstream open reading frame protein functions as a bridging scaffold that interacts with MALSU1 on one side, and with NDUFAB1 on the other side. The complex interacts with the mitochondrial large ribosomal subunit. Interacts with alpha-1-microglobulin chain; this interaction is required for the maintenance of mitochondrial redox homeostasis. Component of the mitochondrial core iron-sulfur cluster (ISC) complex composed of NFS1, LYRM4, NDUFAB1, ISCU, FXN, and FDX2; this complex is a heterohexamer containing two copies of each monomer. Component of the cyteine desulfurase complex composed of NFS1, LYRM4 and NDUFAB1; this complex contributes to the stability and cysteine desulfurase activity of NFS1. In terms of processing, phosphopantetheinylation at Ser-112 is essential for interactions with LYR motif-containing proteins.

The protein resides in the mitochondrion. Functionally, carrier of the growing fatty acid chain in fatty acid biosynthesis. Accessory and non-catalytic subunit of the mitochondrial membrane respiratory chain NADH dehydrogenase (Complex I), which functions in the transfer of electrons from NADH to the respiratory chain. Accessory protein, of the core iron-sulfur cluster (ISC) assembly complex, that regulates, in association with LYRM4, the stability and the cysteine desulfurase activity of NFS1 and participates in the [2Fe-2S] clusters assembly on the scaffolding protein ISCU. The core iron-sulfur cluster (ISC) assembly complex is involved in the de novo synthesis of a [2Fe-2S] cluster, the first step of the mitochondrial iron-sulfur protein biogenesis. This process is initiated by the cysteine desulfurase complex (NFS1:LYRM4:NDUFAB1) that produces persulfide which is delivered on the scaffold protein ISCU in a FXN-dependent manner. Then this complex is stabilized by FDX2 which provides reducing equivalents to accomplish the [2Fe-2S] cluster assembly. Finally, the [2Fe-2S] cluster is transferred from ISCU to chaperone proteins, including HSCB, HSPA9 and GLRX5. This Bos taurus (Bovine) protein is Acyl carrier protein, mitochondrial.